Here is a 466-residue protein sequence, read N- to C-terminus: Anthocyanidin 3-O-glucosyltransferase 1 (466 aa).

The active-site Proton acceptor is histidine 22. 2 residues coordinate an anthocyanidin: histidine 22 and glutamine 87. Aspartate 122 serves as the catalytic Charge relay. UDP-alpha-D-glucose is bound at residue threonine 145. Histidine 154 contributes to the an anthocyanidin binding site. UDP-alpha-D-glucose is bound by residues alanine 346, glutamine 348, histidine 363, tryptophan 366, asparagine 367, serine 368, and glutamate 371. Residue glycine 386 participates in an anthocyanidin binding. 2 residues coordinate UDP-alpha-D-glucose: aspartate 387 and glutamine 388.

This sequence belongs to the UDP-glycosyltransferase family. In terms of tissue distribution, highest expression detected in receptacles and achenes, with very low levels detected in runners, leaves, flowers, crowns and green receptacles.

The enzyme catalyses an anthocyanidin + UDP-alpha-D-glucose + H(+) = an anthocyanidin 3-O-beta-D-glucoside + UDP. It carries out the reaction cyanidin + UDP-alpha-D-glucose = cyanidin 3-O-beta-D-glucoside + UDP + H(+). It catalyses the reaction pelargonidin + UDP-alpha-D-glucose = pelargonidin 3-O-beta-D-glucoside + UDP. The catalysed reaction is peonidin + UDP-alpha-D-glucose = peonidin 3-O-beta-D-glucoside + UDP. The enzyme catalyses delphinidin + UDP-alpha-D-glucose = delphinidin 3-O-beta-D-glucoside + UDP. It carries out the reaction a flavonol + UDP-alpha-D-glucose = a flavonol 3-O-beta-D-glucoside + UDP + H(+). It functions in the pathway pigment biosynthesis; anthocyanin biosynthesis. Its function is as follows. In the presence of other necessary color factors, this glycosylation reaction allows the accumulation of anthocyanin pigments. Uses UDP-Glc as a sugar donor, but not UDP-Gal or UDP-GlcUA. Anthocyanidins are the preferred substrates in vivo, but flavonols can also be glucosylated in vitro. This Fragaria ananassa (Strawberry) protein is Anthocyanidin 3-O-glucosyltransferase 1.